The chain runs to 69 residues: DNA-directed RNA polymerase subunit epsilon (69 aa).

This sequence belongs to the RNA polymerase subunit epsilon family. As to quaternary structure, RNAP is composed of a core of 2 alpha, a beta and a beta' subunit. The core is associated with a delta subunit, and at least one of epsilon or omega. When a sigma factor is associated with the core the holoenzyme is formed, which can initiate transcription.

It catalyses the reaction RNA(n) + a ribonucleoside 5'-triphosphate = RNA(n+1) + diphosphate. In terms of biological role, a non-essential component of RNA polymerase (RNAP). The polypeptide is DNA-directed RNA polymerase subunit epsilon (Bacillus pumilus (strain SAFR-032)).